Here is a 591-residue protein sequence, read N- to C-terminus: Alpha-(1-&gt;6)-mannopyranosyltransferase Rv1459c (591 aa).

Transmembrane regions (helical) follow at residues 40-60, 80-100, 117-137, 201-221, 235-255, 259-279, 321-341, 367-387, 408-428, 441-461, 473-493, 502-522, and 527-547; these read FGAT…ARPV, VSLT…LMLG, TLLL…KDVY, IVAA…LIVW, VSAL…VAGI, ALML…LDMA, EWGP…SSQV, LLLA…ILGW, WMSP…LLGL, AIGV…VLRG, LAVT…WAII, PGFR…GPTA, and FALF…ILLI. Positions 569 to 591 are disordered; that stretch reads ESASKTPATRRPTAAPDAYADST. A compositionally biased stretch (low complexity) spans 574-584; sequence TPATRRPTAAP.

It belongs to the MptA/B family.

It is found in the membrane. Its function is as follows. Catalyzes the addition of alpha-(1-&gt;6)-mannose residue. This chain is Alpha-(1-&gt;6)-mannopyranosyltransferase Rv1459c, found in Mycobacterium tuberculosis (strain ATCC 25618 / H37Rv).